Consider the following 480-residue polypeptide: Cytochrome b-c1 complex subunit 1, mitochondrial (480 aa).

Residues 1-34 (MAASAVCRAAGAGTRVLLRTRRSPALLRSSDLRG) constitute a mitochondrion transit peptide. 2 positions are modified to N6-acetyllysine: lysine 111 and lysine 138. Lysine 163 is subject to N6-acetyllysine; alternate. Position 163 is an N6-succinyllysine; alternate (lysine 163). Serine 212 carries the phosphoserine modification. The residue at position 248 (lysine 248) is an N6-acetyllysine.

Belongs to the peptidase M16 family. UQCRC1/QCR1 subfamily. In terms of assembly, component of the ubiquinol-cytochrome c oxidoreductase (cytochrome b-c1 complex, complex III, CIII), a multisubunit enzyme composed of 11 subunits. The complex is composed of 3 respiratory subunits cytochrome b, cytochrome c1 and Rieske protein UQCRFS1, 2 core protein subunits UQCRC1/QCR1 and UQCRC2/QCR2, and 6 low-molecular weight protein subunits UQCRH/QCR6, UQCRB/QCR7, UQCRQ/QCR8, UQCR10/QCR9, UQCR11/QCR10 and subunit 9, the cleavage product of Rieske protein UQCRFS1. The complex exists as an obligatory dimer and forms supercomplexes (SCs) in the inner mitochondrial membrane with NADH-ubiquinone oxidoreductase (complex I, CI) and cytochrome c oxidase (complex IV, CIV), resulting in different assemblies (supercomplex SCI(1)III(2)IV(1) and megacomplex MCI(2)III(2)IV(2)). Interacts with UQCC6. Interacts with STMP1.

The protein localises to the mitochondrion inner membrane. Component of the ubiquinol-cytochrome c oxidoreductase, a multisubunit transmembrane complex that is part of the mitochondrial electron transport chain which drives oxidative phosphorylation. The respiratory chain contains 3 multisubunit complexes succinate dehydrogenase (complex II, CII), ubiquinol-cytochrome c oxidoreductase (cytochrome b-c1 complex, complex III, CIII) and cytochrome c oxidase (complex IV, CIV), that cooperate to transfer electrons derived from NADH and succinate to molecular oxygen, creating an electrochemical gradient over the inner membrane that drives transmembrane transport and the ATP synthase. The cytochrome b-c1 complex catalyzes electron transfer from ubiquinol to cytochrome c, linking this redox reaction to translocation of protons across the mitochondrial inner membrane, with protons being carried across the membrane as hydrogens on the quinol. In the process called Q cycle, 2 protons are consumed from the matrix, 4 protons are released into the intermembrane space and 2 electrons are passed to cytochrome c. The 2 core subunits UQCRC1/QCR1 and UQCRC2/QCR2 are homologous to the 2 mitochondrial-processing peptidase (MPP) subunits beta-MPP and alpha-MPP respectively, and they seem to have preserved their MPP processing properties. May be involved in the in situ processing of UQCRFS1 into the mature Rieske protein and its mitochondrial targeting sequence (MTS)/subunit 9 when incorporated into complex III. Seems to play an important role in the maintenance of proper mitochondrial function in nigral dopaminergic neurons. This Bos taurus (Bovine) protein is Cytochrome b-c1 complex subunit 1, mitochondrial (UQCRC1).